A 130-amino-acid polypeptide reads, in one-letter code: Small ribosomal subunit protein uS9 (130 aa).

Belongs to the universal ribosomal protein uS9 family.

The chain is Small ribosomal subunit protein uS9 from Halalkalibacterium halodurans (strain ATCC BAA-125 / DSM 18197 / FERM 7344 / JCM 9153 / C-125) (Bacillus halodurans).